We begin with the raw amino-acid sequence, 413 residues long: Serine hydroxymethyltransferase (413 aa).

Residues Leu-120 and 124–126 contribute to the (6S)-5,6,7,8-tetrahydrofolate site; that span reads GHL. Lys-229 carries the post-translational modification N6-(pyridoxal phosphate)lysine. 352–354 serves as a coordination point for (6S)-5,6,7,8-tetrahydrofolate; that stretch reads SPF.

This sequence belongs to the SHMT family. Homodimer. It depends on pyridoxal 5'-phosphate as a cofactor.

The protein localises to the cytoplasm. The enzyme catalyses (6R)-5,10-methylene-5,6,7,8-tetrahydrofolate + glycine + H2O = (6S)-5,6,7,8-tetrahydrofolate + L-serine. The protein operates within one-carbon metabolism; tetrahydrofolate interconversion. Its pathway is amino-acid biosynthesis; glycine biosynthesis; glycine from L-serine: step 1/1. Its function is as follows. Catalyzes the reversible interconversion of serine and glycine with tetrahydrofolate (THF) serving as the one-carbon carrier. This reaction serves as the major source of one-carbon groups required for the biosynthesis of purines, thymidylate, methionine, and other important biomolecules. Also exhibits THF-independent aldolase activity toward beta-hydroxyamino acids, producing glycine and aldehydes, via a retro-aldol mechanism. The polypeptide is Serine hydroxymethyltransferase (Heliobacterium modesticaldum (strain ATCC 51547 / Ice1)).